Reading from the N-terminus, the 326-residue chain is tRNA uridine(34) hydroxylase (326 aa).

Residues 123–217 (SDPDVILVDT…YLEEVKQEES (95 aa)) enclose the Rhodanese domain. The active-site Cysteine persulfide intermediate is the Cys-177.

Belongs to the TrhO family.

It catalyses the reaction uridine(34) in tRNA + AH2 + O2 = 5-hydroxyuridine(34) in tRNA + A + H2O. In terms of biological role, catalyzes oxygen-dependent 5-hydroxyuridine (ho5U) modification at position 34 in tRNAs. This chain is tRNA uridine(34) hydroxylase, found in Shewanella denitrificans (strain OS217 / ATCC BAA-1090 / DSM 15013).